Here is a 331-residue protein sequence, read N- to C-terminus: 6-phosphogluconolactonase (331 aa).

Lys287 carries the post-translational modification N6-acetyllysine.

It belongs to the cycloisomerase 2 family.

It catalyses the reaction 6-phospho-D-glucono-1,5-lactone + H2O = 6-phospho-D-gluconate + H(+). Its pathway is carbohydrate degradation; pentose phosphate pathway; D-ribulose 5-phosphate from D-glucose 6-phosphate (oxidative stage): step 2/3. Its function is as follows. Catalyzes the hydrolysis of 6-phosphogluconolactone to 6-phosphogluconate. The polypeptide is 6-phosphogluconolactonase (Escherichia coli O139:H28 (strain E24377A / ETEC)).